We begin with the raw amino-acid sequence, 418 residues long: Cyclin-A1 (418 aa).

The protein belongs to the cyclin family. Cyclin AB subfamily. Interacts with the CDK1 and the CDK2 protein kinases to form a serine/threonine kinase holoenzyme complex. The cyclin subunit imparts substrate specificity to the complex.

It localises to the nucleus. In terms of biological role, may be involved in the control of the cell cycle at the G1/S (start) and G2/M (mitosis) transitions. The polypeptide is Cyclin-A1 (ccna1) (Xenopus laevis (African clawed frog)).